We begin with the raw amino-acid sequence, 286 residues long: 4-hydroxybenzoate octaprenyltransferase (286 aa).

8 helical membrane-spanning segments follow: residues 20–40, 43–63, 95–115, 116–136, 142–162, 167–187, 210–230, and 235–255; these read IGTF…AGGM, LKVL…GCII, ILFV…NPLV, VQLS…KRFT, FLGV…LGTV, WWLF…YAMV, QIIG…GLSA, and VFAL…KLIF.

This sequence belongs to the UbiA prenyltransferase family. It depends on Mg(2+) as a cofactor.

The protein localises to the cell inner membrane. The catalysed reaction is all-trans-octaprenyl diphosphate + 4-hydroxybenzoate = 4-hydroxy-3-(all-trans-octaprenyl)benzoate + diphosphate. It participates in cofactor biosynthesis; ubiquinone biosynthesis. Its function is as follows. Catalyzes the prenylation of para-hydroxybenzoate (PHB) with an all-trans polyprenyl group. Mediates the second step in the final reaction sequence of ubiquinone-8 (UQ-8) biosynthesis, which is the condensation of the polyisoprenoid side chain with PHB, generating the first membrane-bound Q intermediate 3-octaprenyl-4-hydroxybenzoate. The polypeptide is 4-hydroxybenzoate octaprenyltransferase (Shewanella loihica (strain ATCC BAA-1088 / PV-4)).